The primary structure comprises 343 residues: UDP-N-acetylglucosamine--N-acetylmuramyl-(pentapeptide) pyrophosphoryl-undecaprenol N-acetylglucosamine transferase (343 aa).

UDP-N-acetyl-alpha-D-glucosamine-binding positions include 10-12 (TGG), Asn-113, Ser-174, and Gln-275.

The protein belongs to the glycosyltransferase 28 family. MurG subfamily.

The protein localises to the cell membrane. The enzyme catalyses di-trans,octa-cis-undecaprenyl diphospho-N-acetyl-alpha-D-muramoyl-L-alanyl-D-glutamyl-meso-2,6-diaminopimeloyl-D-alanyl-D-alanine + UDP-N-acetyl-alpha-D-glucosamine = di-trans,octa-cis-undecaprenyl diphospho-[N-acetyl-alpha-D-glucosaminyl-(1-&gt;4)]-N-acetyl-alpha-D-muramoyl-L-alanyl-D-glutamyl-meso-2,6-diaminopimeloyl-D-alanyl-D-alanine + UDP + H(+). Its pathway is cell wall biogenesis; peptidoglycan biosynthesis. Cell wall formation. Catalyzes the transfer of a GlcNAc subunit on undecaprenyl-pyrophosphoryl-MurNAc-pentapeptide (lipid intermediate I) to form undecaprenyl-pyrophosphoryl-MurNAc-(pentapeptide)GlcNAc (lipid intermediate II). The sequence is that of UDP-N-acetylglucosamine--N-acetylmuramyl-(pentapeptide) pyrophosphoryl-undecaprenol N-acetylglucosamine transferase from Wolbachia sp. subsp. Drosophila simulans (strain wRi).